A 360-amino-acid polypeptide reads, in one-letter code: Bifunctional protein FolD 4, chloroplastic (360 aa).

The transit peptide at 1–51 (MASMMFTDCSSTTTSRLIHLNRSSGTFLLRQCVGQLRLQTTASGRGCCIRS) directs the protein to the chloroplast. Serine 52 bears the N-acetylserine mark.

Belongs to the tetrahydrofolate dehydrogenase/cyclohydrolase family. In terms of assembly, homodimer.

It is found in the plastid. The protein resides in the chloroplast. It catalyses the reaction (6R)-5,10-methylene-5,6,7,8-tetrahydrofolate + NADP(+) = (6R)-5,10-methenyltetrahydrofolate + NADPH. The enzyme catalyses (6R)-5,10-methenyltetrahydrofolate + H2O = (6R)-10-formyltetrahydrofolate + H(+). Its pathway is one-carbon metabolism; tetrahydrofolate interconversion. Its function is as follows. Catalyzes the oxidation of 5,10-methylenetetrahydrofolate to 5,10-methenyltetrahydrofolate and then the hydrolysis of 5,10-methenyltetrahydrofolate to 10-formyltetrahydrofolate. This is Bifunctional protein FolD 4, chloroplastic (FOLD4) from Arabidopsis thaliana (Mouse-ear cress).